A 1075-amino-acid polypeptide reads, in one-letter code: DNA-directed RNA polymerase subunit beta (1075 aa).

Belongs to the RNA polymerase beta chain family. As to quaternary structure, in plastids the minimal PEP RNA polymerase catalytic core is composed of four subunits: alpha, beta, beta', and beta''. When a (nuclear-encoded) sigma factor is associated with the core the holoenzyme is formed, which can initiate transcription.

Its subcellular location is the plastid. It is found in the chloroplast. The enzyme catalyses RNA(n) + a ribonucleoside 5'-triphosphate = RNA(n+1) + diphosphate. Its function is as follows. DNA-dependent RNA polymerase catalyzes the transcription of DNA into RNA using the four ribonucleoside triphosphates as substrates. The protein is DNA-directed RNA polymerase subunit beta of Pinus thunbergii (Japanese black pine).